Reading from the N-terminus, the 194-residue chain is Imidazoleglycerol-phosphate dehydratase (194 aa).

Belongs to the imidazoleglycerol-phosphate dehydratase family.

It localises to the cytoplasm. It carries out the reaction D-erythro-1-(imidazol-4-yl)glycerol 3-phosphate = 3-(imidazol-4-yl)-2-oxopropyl phosphate + H2O. Its pathway is amino-acid biosynthesis; L-histidine biosynthesis; L-histidine from 5-phospho-alpha-D-ribose 1-diphosphate: step 6/9. The protein is Imidazoleglycerol-phosphate dehydratase of Listeria welshimeri serovar 6b (strain ATCC 35897 / DSM 20650 / CCUG 15529 / CIP 8149 / NCTC 11857 / SLCC 5334 / V8).